A 335-amino-acid polypeptide reads, in one-letter code: Ornithine carbamoyltransferase, catabolic (335 aa).

Carbamoyl phosphate-binding positions include 59–62, Gln-86, Arg-110, and 137–140; these read STRT and HPTQ. Residues Asn-169, Asp-233, and 237 to 238 each bind L-ornithine; that span reads SM. Carbamoyl phosphate is bound by residues 274–275 and Arg-319; that span reads CL.

It belongs to the aspartate/ornithine carbamoyltransferase superfamily. OTCase family.

The protein resides in the cytoplasm. The enzyme catalyses carbamoyl phosphate + L-ornithine = L-citrulline + phosphate + H(+). It participates in amino-acid degradation; L-arginine degradation via ADI pathway; carbamoyl phosphate from L-arginine: step 2/2. Reversibly catalyzes the transfer of the carbamoyl group from carbamoyl phosphate (CP) to the N(epsilon) atom of ornithine (ORN) to produce L-citrulline. This chain is Ornithine carbamoyltransferase, catabolic (arcB), found in Bacillus licheniformis (strain ATCC 14580 / DSM 13 / JCM 2505 / CCUG 7422 / NBRC 12200 / NCIMB 9375 / NCTC 10341 / NRRL NRS-1264 / Gibson 46).